The following is a 205-amino-acid chain: Octanoyltransferase (205 aa).

One can recognise a BPL/LPL catalytic domain in the interval 30–205 (ERTADEIWLL…QALRARLGYA (176 aa)). Residues 69–76 (RGGQVTYH), 136–138 (SLG), and 149–151 (GLA) contribute to the substrate site. Cys-167 functions as the Acyl-thioester intermediate in the catalytic mechanism.

This sequence belongs to the LipB family.

It localises to the cytoplasm. The catalysed reaction is octanoyl-[ACP] + L-lysyl-[protein] = N(6)-octanoyl-L-lysyl-[protein] + holo-[ACP] + H(+). It functions in the pathway protein modification; protein lipoylation via endogenous pathway; protein N(6)-(lipoyl)lysine from octanoyl-[acyl-carrier-protein]: step 1/2. Functionally, catalyzes the transfer of endogenously produced octanoic acid from octanoyl-acyl-carrier-protein onto the lipoyl domains of lipoate-dependent enzymes. Lipoyl-ACP can also act as a substrate although octanoyl-ACP is likely to be the physiological substrate. The polypeptide is Octanoyltransferase (Ectopseudomonas mendocina (strain ymp) (Pseudomonas mendocina)).